Here is a 248-residue protein sequence, read N- to C-terminus: NADP-dependent 3-hydroxy acid dehydrogenase YdfG (248 aa).

NADP(+)-binding positions include glycine 7–phenylalanine 12, arginine 32–arginine 33, aspartate 54–valine 55, and asparagine 81. Serine 134 contributes to the substrate binding site. Residues tyrosine 147, lysine 151, and proline 177–phenylalanine 185 contribute to the NADP(+) site. Tyrosine 147 serves as the catalytic Proton acceptor.

It belongs to the short-chain dehydrogenases/reductases (SDR) family. As to quaternary structure, homotetramer.

It catalyses the reaction 3-hydroxypropanoate + NADP(+) = 3-oxopropanoate + NADPH + H(+). The enzyme catalyses L-allo-threonine + NADP(+) = aminoacetone + CO2 + NADPH. NADP-dependent dehydrogenase with broad substrate specificity acting on 3-hydroxy acids. Catalyzes the NADP-dependent oxidation of L-allo-threonine to L-2-amino-3-keto-butyrate, which is spontaneously decarboxylated into aminoacetone. Also acts on D-threonine, L-serine, D-serine, D-3-hydroxyisobutyrate, L-3-hydroxyisobutyrate, D-glycerate and L-glycerate. Able to catalyze the reduction of the malonic semialdehyde to 3-hydroxypropionic acid. YdfG is apparently supplementing RutE, the presumed malonic semialdehyde reductase involved in pyrimidine degradation since both are able to detoxify malonic semialdehyde. This chain is NADP-dependent 3-hydroxy acid dehydrogenase YdfG, found in Escherichia coli O6:H1 (strain CFT073 / ATCC 700928 / UPEC).